A 211-amino-acid polypeptide reads, in one-letter code: Ribosomal RNA small subunit methyltransferase G (211 aa).

S-adenosyl-L-methionine-binding positions include Gly78, Met83, 129–130 (AE), and Arg144.

It belongs to the methyltransferase superfamily. RNA methyltransferase RsmG family.

It is found in the cytoplasm. It carries out the reaction guanosine(527) in 16S rRNA + S-adenosyl-L-methionine = N(7)-methylguanosine(527) in 16S rRNA + S-adenosyl-L-homocysteine. Its function is as follows. Specifically methylates the N7 position of guanine in position 527 of 16S rRNA. This chain is Ribosomal RNA small subunit methyltransferase G, found in Pseudomonas syringae pv. tomato (strain ATCC BAA-871 / DC3000).